Consider the following 359-residue polypeptide: Type-1 angiotensin II receptor (359 aa).

The Extracellular portion of the chain corresponds to 1 to 25 (MALNSSADDGIKRIQDDCPKAGRHS). Asn4 is a glycosylation site (N-linked (GlcNAc...) asparagine). Angiotensin II is bound by residues Gln15 and Asp17. 2 disulfides stabilise this stretch: Cys18–Cys274 and Cys101–Cys180. A helical transmembrane segment spans residues 26-55 (YIFVMIPTLYSIIFVVGIFGNSLVVIVIYF). At 56–61 (YMKLKT) the chain is on the cytoplasmic side. A helical membrane pass occupies residues 62 to 89 (VASVFLLNLALADLCFLLTLPVWAVYTA). The Extracellular portion of the chain corresponds to 90–98 (MEYRWPFGN). Residues 99–125 (HLCKIASAGISFNLYASVFLLTCLSID) traverse the membrane as a helical segment. Residues 126–141 (RYLAIVHPMKSRLRRT) lie on the Cytoplasmic side of the membrane. Residues 142–165 (MLVAKVTCVVIWLLAGLASLPAVI) traverse the membrane as a helical segment. Residues 166–190 (HRNVYFIENTNSTVCAFHYESQNST) are Extracellular-facing. Residue Arg167 coordinates angiotensin II. Residue Asn176 is glycosylated (N-linked (GlcNAc...) asparagine). Angiotensin II contacts are provided by Phe182, His183, and Tyr184. Asn188 carries an N-linked (GlcNAc...) asparagine glycan. Residues 191–216 (LPVGLGLTKNILGFMFPFLIILTSYT) traverse the membrane as a helical segment. Lys199 provides a ligand contact to angiotensin II. Residues 217-239 (LIWKALKKAYEIQKNKPRNDDIF) are Cytoplasmic-facing. A helical membrane pass occupies residues 240 to 268 (RIIMAIVLFFFFSWIPHQIFTFLDVLIQL). The Extracellular portion of the chain corresponds to 269-278 (GVIRDCKIAD). Residues 279 to 304 (VVDTAMPITICIAYFNNCLNPLFYGF) form a helical membrane-spanning segment. Residues 305–359 (LGKKFKKYFLQLLKYIPPKAKSHSSLSTKMSTLSYRPSDNMNSSAKKPASCFEVE) lie on the Cytoplasmic side of the membrane. Cys355 carries S-palmitoyl cysteine lipidation.

Belongs to the G-protein coupled receptor 1 family. Interacts with MAS1. Interacts with ARRB1. Interacts with FLNA (via filamin repeat 21); increases PKA-mediated phosphorylation of FLNA. C-terminal Ser or Thr residues may be phosphorylated.

The protein resides in the cell membrane. Functionally, receptor for angiotensin II, a vasoconstricting peptide, which acts as a key regulator of blood pressure and sodium retention by the kidney. The activated receptor in turn couples to G-alpha proteins G(q) (GNAQ, GNA11, GNA14 or GNA15) and thus activates phospholipase C and increases the cytosolic Ca(2+) concentrations, which in turn triggers cellular responses such as stimulation of protein kinase C. This chain is Type-1 angiotensin II receptor (AGTR1), found in Meriones unguiculatus (Mongolian jird).